Here is a 567-residue protein sequence, read N- to C-terminus: Geranylgeranyl transferase type-2 subunit alpha (567 aa).

PFTA repeat units lie at residues 44–78 (LDESVLELTSQILGANPDFATLWNCRREVLQRLEV), 88–122 (LVKAELGFLESCLRVNPKSYGTWHHRCWLLGRLPE), 124–158 (NWARELELCARFLEVDERNFHCWDYRRFVASQAAV), 159–193 (PPAEELAFTDSLITRNFSNYSSWHYRSCLLPQLHP), 207–241 (VLLKELELVQNAFFTDPNDQSAWFYHRWLLGRADP), and 363–397 (VLQSELESCKELQELEPENKWCLLTIILLMRALDP). Position 98 is a phosphoserine (Ser98). 5 LRR repeats span residues 442–463 (DVRVLHLGHKDLTVLCHLEQLL), 464–486 (LVTHLDLSHNRLRALPPALAALR), 487–508 (CLEVLQANDNAIESLDGVTNLP), 509–530 (RLQELSLCNNRLQQPAVLQPLA), and 534–555 (RLVLLNLQDNPLCQAVGISEHL).

Belongs to the protein prenyltransferase subunit alpha family. As to quaternary structure, heterotrimer composed of RABGGTA, RABGGTB and CHM; within this trimer, RABGGTA and RABGGTB form the catalytic component B, while CHM (component A) mediates peptide substrate binding. The Rab GGTase dimer (RGGT) interacts with CHM (component A) prior to Rab protein binding; the association is stabilized by geranylgeranyl pyrophosphate (GGpp). The CHM:RGGT:Rab complex is destabilized by GGpp. Interacts with non-phosphorylated form of RAB8A; phosphorylation of RAB8A disrupts this interaction.

It carries out the reaction geranylgeranyl diphosphate + L-cysteinyl-[protein] = S-geranylgeranyl-L-cysteinyl-[protein] + diphosphate. Its activity is regulated as follows. The enzymatic reaction requires the aid of a Rab escort protein (also called component A), such as CHM. Its function is as follows. Catalyzes the transfer of a geranylgeranyl moiety from geranylgeranyl diphosphate to both cysteines of Rab proteins with the C-terminal sequence -XXCC, -XCXC and -CCXX, such as RAB1A, RAB3A, RAB5A and RAB7A. The chain is Geranylgeranyl transferase type-2 subunit alpha (RABGGTA) from Sus scrofa (Pig).